Consider the following 473-residue polypeptide: Putative amidase AmiC (473 aa).

Active-site charge relay system residues include lysine 82 and serine 157. The active-site Acyl-ester intermediate is serine 181.

The protein belongs to the amidase family.

The catalysed reaction is a monocarboxylic acid amide + H2O = a monocarboxylate + NH4(+). The sequence is that of Putative amidase AmiC (amiC) from Mycobacterium bovis (strain ATCC BAA-935 / AF2122/97).